A 750-amino-acid polypeptide reads, in one-letter code: Photosystem I P700 chlorophyll a apoprotein A1 (750 aa).

8 helical membrane passes run 70–93 (VFSA…FHGA), 156–179 (LYCT…FHYH), 195–219 (LNHH…HVSL), 291–309 (IAHH…GHMY), 346–369 (WHAQ…HHMY), 385–411 (LSLF…IFMV), 433–455 (AIIS…LYIH), and 531–549 (FLVH…LILL). [4Fe-4S] cluster is bound by residues Cys-573 and Cys-582. Helical transmembrane passes span 589 to 610 (HVFL…HFSW) and 664 to 686 (LSAY…MFLF). His-675 provides a ligand contact to chlorophyll a'. The chlorophyll a site is built by Met-683 and Tyr-691. Trp-692 contacts phylloquinone. A helical membrane pass occupies residues 724 to 744 (AVGVTHYLLGGIATTWAFFLA).

It belongs to the PsaA/PsaB family. As to quaternary structure, the PsaA/B heterodimer binds the P700 chlorophyll special pair and subsequent electron acceptors. PSI consists of a core antenna complex that captures photons, and an electron transfer chain that converts photonic excitation into a charge separation. The eukaryotic PSI reaction center is composed of at least 11 subunits. P700 is a chlorophyll a/chlorophyll a' dimer, A0 is one or more chlorophyll a, A1 is one or both phylloquinones and FX is a shared 4Fe-4S iron-sulfur center. is required as a cofactor.

It localises to the plastid. Its subcellular location is the chloroplast thylakoid membrane. The catalysed reaction is reduced [plastocyanin] + hnu + oxidized [2Fe-2S]-[ferredoxin] = oxidized [plastocyanin] + reduced [2Fe-2S]-[ferredoxin]. Its function is as follows. PsaA and PsaB bind P700, the primary electron donor of photosystem I (PSI), as well as the electron acceptors A0, A1 and FX. PSI is a plastocyanin-ferredoxin oxidoreductase, converting photonic excitation into a charge separation, which transfers an electron from the donor P700 chlorophyll pair to the spectroscopically characterized acceptors A0, A1, FX, FA and FB in turn. Oxidized P700 is reduced on the lumenal side of the thylakoid membrane by plastocyanin. The sequence is that of Photosystem I P700 chlorophyll a apoprotein A1 from Agrostis stolonifera (Creeping bentgrass).